A 482-amino-acid chain; its full sequence is UDP-N-acetylmuramate--L-alanine ligase (482 aa).

Residue 123–129 (GTHGKTT) coordinates ATP.

This sequence belongs to the MurCDEF family.

The protein localises to the cytoplasm. The catalysed reaction is UDP-N-acetyl-alpha-D-muramate + L-alanine + ATP = UDP-N-acetyl-alpha-D-muramoyl-L-alanine + ADP + phosphate + H(+). It functions in the pathway cell wall biogenesis; peptidoglycan biosynthesis. Its function is as follows. Cell wall formation. In Pseudomonas putida (strain W619), this protein is UDP-N-acetylmuramate--L-alanine ligase.